Consider the following 203-residue polypeptide: Recombination protein RecR (203 aa).

The C4-type zinc finger occupies 56–71 (CAVCGNVSDEERCRIC). A Toprim domain is found at 79-179 (SLICVVEEPK…TVTRIASGLP (101 aa)).

Belongs to the RecR family.

May play a role in DNA repair. It seems to be involved in an RecBC-independent recombinational process of DNA repair. It may act with RecF and RecO. The chain is Recombination protein RecR from Mycolicibacterium vanbaalenii (strain DSM 7251 / JCM 13017 / BCRC 16820 / KCTC 9966 / NRRL B-24157 / PYR-1) (Mycobacterium vanbaalenii).